The chain runs to 1202 residues: CHD3-type chromatin-remodeling factor CHR7 (1202 aa).

2 Chromo domains span residues 45 to 109 and 142 to 201; these read GEIE…HPHL and KTVD…RDKY. The Helicase ATP-binding domain occupies 237–405; that stretch reads RYSWSKKTNV…FALMHFLDAD (169 aa). ATP is bound at residue 250-257; the sequence is DEMGLGKT. The DEAH box motif lies at 356 to 359; the sequence is DEGH. One can recognise a Helicase C-terminal domain in the interval 528–679; the sequence is LLDKMMVKLK…HLVVGKQHLC (152 aa). The disordered stretch occupies residues 838-872; it reads TSDEEEEADEPEAARQRKPRTVTRPYRKRARDNSE. The segment covering 853–867 has biased composition (basic residues); the sequence is QRKPRTVTRPYRKRA.

This sequence belongs to the SNF2/RAD54 helicase family.

The protein resides in the nucleus. In terms of biological role, chromatin remodeling factor that represses the expression of embryonic trait genes upon and after seed germination and thus enables the developmental switch to post-germinative growth. The chain is CHD3-type chromatin-remodeling factor CHR7 from Arabidopsis thaliana (Mouse-ear cress).